The sequence spans 90 residues: MGLKEDFEEHAEKAKTLPENTTNENKLILYGLYKQATVGPVNTSRPGMFNMRDRAKWDAWKAVEGKSTEEAMSDYITKVKQLLGEAAASA.

The segment covering 1-16 has biased composition (basic and acidic residues); the sequence is MGLKEDFEEHAEKAKT. The disordered stretch occupies residues 1 to 20; it reads MGLKEDFEEHAEKAKTLPEN. Positions 3 to 88 constitute an ACB domain; sequence LKEDFEEHAE…VKQLLGEAAA (86 aa). Residues 30–34, K56, and Y75 each bind an acyl-CoA; that span reads YGLYK.

This sequence belongs to the ACBP family.

In terms of biological role, binds medium- and long-chain acyl-CoA esters with very high affinity and may function as an intracellular carrier of acyl-CoA esters. This Ricinus communis (Castor bean) protein is Acyl-CoA-binding protein.